The chain runs to 317 residues: Melanocyte-stimulating hormone receptor (317 aa).

Residues 1–37 (MPMQGAQRRLLGSLNSTPTATPNLGLAANHTGAPCLE) are Extracellular-facing. N-linked (GlcNAc...) asparagine glycosylation occurs at N29. A helical membrane pass occupies residues 38–63 (VSIPHGLFLSLGLVSLVENVLVVAAI). Residues 64-72 (AKNRNLHSP) are Cytoplasmic-facing. The helical transmembrane segment at 73-93 (MYCFICCLALSDLLVSGSNML) threads the bilayer. Over 94 to 118 (ETAVILLLEAGALATRASVVQQLQN) the chain is Extracellular. Residues 119 to 140 (TIDVLTCSSMLCSLCFLGAIAV) traverse the membrane as a helical segment. The Cytoplasmic segment spans residues 141 to 163 (DRYVSIFYALRYHSIVTLPRARR). A helical membrane pass occupies residues 164-183 (AIAAIWVASVLSSTLFIAYC). The Extracellular segment spans residues 184-191 (DHAAVLLC). A helical membrane pass occupies residues 192–211 (LVVFFLAMLVLMAVLYVHML). Topologically, residues 212–240 (ARACQHAQGITRLHKRQLPAHQGFGLRGA) are cytoplasmic. A helical membrane pass occupies residues 241 to 266 (ATLTILLGIFFLCWGPFFLHLMLVVL). The Extracellular portion of the chain corresponds to 267-279 (CPQHLTCSCIFKN). The chain crosses the membrane as a helical span at residues 280 to 300 (FKVFLTLIICNTIIDPLIYAF). At 301 to 317 (RSQELCRTLKEVLLCSW) the chain is on the cytoplasmic side. C315 is lipidated: S-palmitoyl cysteine.

This sequence belongs to the G-protein coupled receptor 1 family. Interacts with MGRN1, but does not undergo MGRN1-mediated ubiquitination; this interaction competes with GNAS-binding and thus inhibits agonist-induced cAMP production. Interacts with OPN3; the interaction results in a decrease in MC1R-mediated cAMP signaling and ultimately a decrease in melanin production in melanocytes.

The protein resides in the cell membrane. Functionally, receptor for MSH (alpha, beta and gamma) and ACTH. The activity of this receptor is mediated by G proteins which activate adenylate cyclase. Mediates melanogenesis, the production of eumelanin (black/brown) and phaeomelanin (red/yellow), via regulation of cAMP signaling in melanocytes. This chain is Melanocyte-stimulating hormone receptor (MC1R), found in Alouatta caraya (Black howler monkey).